Here is a 206-residue protein sequence, read N- to C-terminus: Outer-membrane lipoprotein carrier protein (206 aa).

A signal peptide spans 1–21 (MKKLLCAVLLSPLLYSNAVLA).

Belongs to the LolA family. In terms of assembly, monomer.

The protein resides in the periplasm. Participates in the translocation of lipoproteins from the inner membrane to the outer membrane. Only forms a complex with a lipoprotein if the residue after the N-terminal Cys is not an aspartate (The Asp acts as a targeting signal to indicate that the lipoprotein should stay in the inner membrane). The protein is Outer-membrane lipoprotein carrier protein of Shewanella sp. (strain MR-7).